Consider the following 455-residue polypeptide: Chromosomal replication initiator protein DnaA (455 aa).

The domain I, interacts with DnaA modulators stretch occupies residues 1–75; it reads MDTNNNIEKE…EILSQNKVGM (75 aa). The interval 75-106 is domain II; the sequence is MHLAHSVDVRIEVAPKIQISTQSNINYKATKM. The segment at 107–321 is domain III, AAA+ region; it reads SVKDSYTFEN…GAIIKISVNA (215 aa). ATP is bound by residues Gly-151, Gly-153, Lys-154, and Thr-155. Residues 322-455 are domain IV, binds dsDNA; it reads NLMNASIDLN…DKKTAFNSSE (134 aa).

It belongs to the DnaA family. Oligomerizes as a right-handed, spiral filament on DNA at oriC.

Its subcellular location is the cytoplasm. Plays an essential role in the initiation and regulation of chromosomal replication. ATP-DnaA binds to the origin of replication (oriC) to initiate formation of the DNA replication initiation complex once per cell cycle. Binds the DnaA box (a 9 base pair repeat at the origin) and separates the double-stranded (ds)DNA. Forms a right-handed helical filament on oriC DNA; dsDNA binds to the exterior of the filament while single-stranded (ss)DNA is stabiized in the filament's interior. The ATP-DnaA-oriC complex binds and stabilizes one strand of the AT-rich DNA unwinding element (DUE), permitting loading of DNA polymerase. After initiation quickly degrades to an ADP-DnaA complex that is not apt for DNA replication. Binds acidic phospholipids. The chain is Chromosomal replication initiator protein DnaA from Helicobacter pylori (strain HPAG1).